The sequence spans 457 residues: Bifunctional protein GlmU (457 aa).

The pyrophosphorylase stretch occupies residues 1-230; it reads MSKRYAVVLA…FEESLGVNDR (230 aa). UDP-N-acetyl-alpha-D-glucosamine is bound by residues 9-12, Lys-23, Gln-73, and 78-79; these read LAAG and GT. Asp-103 is a binding site for Mg(2+). UDP-N-acetyl-alpha-D-glucosamine-binding residues include Gly-140, Glu-155, Asn-170, and Asn-228. Residue Asn-228 participates in Mg(2+) binding. A linker region spans residues 231–251; that stretch reads IALAEASKLMQRRINENHMRN. An N-acetyltransferase region spans residues 252 to 457; that stretch reads GVTLVNPENT…GYAKHLNHGK (206 aa). The UDP-N-acetyl-alpha-D-glucosamine site is built by Arg-333 and Lys-351. The active-site Proton acceptor is the His-363. Residues Tyr-366 and Asn-377 each contribute to the UDP-N-acetyl-alpha-D-glucosamine site. Residues 386-387, Ala-423, and Arg-440 each bind acetyl-CoA; that span reads NY.

The protein in the N-terminal section; belongs to the N-acetylglucosamine-1-phosphate uridyltransferase family. This sequence in the C-terminal section; belongs to the transferase hexapeptide repeat family. As to quaternary structure, homotrimer. Requires Mg(2+) as cofactor.

It is found in the cytoplasm. The catalysed reaction is alpha-D-glucosamine 1-phosphate + acetyl-CoA = N-acetyl-alpha-D-glucosamine 1-phosphate + CoA + H(+). The enzyme catalyses N-acetyl-alpha-D-glucosamine 1-phosphate + UTP + H(+) = UDP-N-acetyl-alpha-D-glucosamine + diphosphate. It participates in nucleotide-sugar biosynthesis; UDP-N-acetyl-alpha-D-glucosamine biosynthesis; N-acetyl-alpha-D-glucosamine 1-phosphate from alpha-D-glucosamine 6-phosphate (route II): step 2/2. It functions in the pathway nucleotide-sugar biosynthesis; UDP-N-acetyl-alpha-D-glucosamine biosynthesis; UDP-N-acetyl-alpha-D-glucosamine from N-acetyl-alpha-D-glucosamine 1-phosphate: step 1/1. Its pathway is bacterial outer membrane biogenesis; LPS lipid A biosynthesis. Its function is as follows. Catalyzes the last two sequential reactions in the de novo biosynthetic pathway for UDP-N-acetylglucosamine (UDP-GlcNAc). The C-terminal domain catalyzes the transfer of acetyl group from acetyl coenzyme A to glucosamine-1-phosphate (GlcN-1-P) to produce N-acetylglucosamine-1-phosphate (GlcNAc-1-P), which is converted into UDP-GlcNAc by the transfer of uridine 5-monophosphate (from uridine 5-triphosphate), a reaction catalyzed by the N-terminal domain. The chain is Bifunctional protein GlmU from Listeria innocua serovar 6a (strain ATCC BAA-680 / CLIP 11262).